Reading from the N-terminus, the 401-residue chain is Splicing factor 45 (401 aa).

Serine 2 carries the N-acetylserine modification. Serine 2 bears the Phosphoserine mark. A Glycyl lysine isopeptide (Lys-Gly) (interchain with G-Cter in SUMO2) cross-link involves residue lysine 15. Residue lysine 21 is modified to N6-acetyllysine. Residues lysine 24 and lysine 33 each participate in a glycyl lysine isopeptide (Lys-Gly) (interchain with G-Cter in SUMO2) cross-link. Lysine 41 carries the N6-acetyllysine; alternate modification. A Glycyl lysine isopeptide (Lys-Gly) (interchain with G-Cter in SUMO2); alternate cross-link involves residue lysine 41. The span at 57–68 (LKRGGSSDDRQI) shows a compositional bias: basic and acidic residues. Disordered stretches follow at residues 57–84 (LKRGGSSDDRQIVDTPPHVAAGLKDPVP) and 114–233 (RQRE…FLAN). Lysine 58 participates in a covalent cross-link: Glycyl lysine isopeptide (Lys-Gly) (interchain with G-Cter in SUMO2). Threonine 71 bears the Phosphothreonine mark. Basic and acidic residues predominate over residues 114–153 (RQREERQRQRELERQKEIEEREKRRKDRHEASGFARRPDP). Phosphoserine is present on residues serine 155 and serine 169. Positions 182-200 (VEKDKELPRDFPYEEDSRP) are enriched in basic and acidic residues. Serine 222 is modified (phosphoserine). Positions 235 to 283 (GGTVAHKIMQKYGFREGQGLGKHEQGLSTALSVEKTSKRGGKIIVGDAT) constitute a G-patch domain. The residue at position 237 (threonine 237) is a Phosphothreonine. Lysine 256 participates in a covalent cross-link: Glycyl lysine isopeptide (Lys-Gly) (interchain with G-Cter in SUMO2). Serine 266 bears the Phosphoserine mark. Lysine 276 is covalently cross-linked (Glycyl lysine isopeptide (Lys-Gly) (interchain with G-Cter in SUMO2)). A phosphoserine mark is found at serine 291 and serine 293. Positions 306-385 (VVLLRNMVGA…YFGGRVVKAC (80 aa)) constitute an RRM domain.

Binds SXL. Associates with the spliceosome. Interacts with SF3B1, SF1 and U2AF2.

The protein resides in the nucleus. Functionally, splice factor that binds to the single-stranded 3'AG at the exon/intron border and promotes its utilization in the second catalytic step. Involved in the regulation of alternative splicing and the utilization of cryptic splice sites. Promotes the utilization of a cryptic splice site created by the beta-110 mutation in the HBB gene. The resulting frameshift leads to sickle cell anemia. In Homo sapiens (Human), this protein is Splicing factor 45 (RBM17).